Reading from the N-terminus, the 238-residue chain is uncharacterized protein (238 aa).

Residues 1 to 64 (MRLDKYLSKS…KPKKNVYLML (64 aa)) form the S4 RNA-binding domain. Catalysis depends on Asp103, which acts as the Nucleophile.

It belongs to the pseudouridine synthase RsuA family.

It catalyses the reaction a uridine in RNA = a pseudouridine in RNA. This is an uncharacterized protein from Aquifex aeolicus (strain VF5).